A 352-amino-acid polypeptide reads, in one-letter code: DNA polymerase IV (352 aa).

The UmuC domain maps to Ile-4–Gly-185. Residues Asp-8 and Asp-103 each contribute to the Mg(2+) site. Glu-104 is a catalytic residue.

It belongs to the DNA polymerase type-Y family. In terms of assembly, monomer. The cofactor is Mg(2+).

Its subcellular location is the cytoplasm. The catalysed reaction is DNA(n) + a 2'-deoxyribonucleoside 5'-triphosphate = DNA(n+1) + diphosphate. Functionally, poorly processive, error-prone DNA polymerase involved in untargeted mutagenesis. Copies undamaged DNA at stalled replication forks, which arise in vivo from mismatched or misaligned primer ends. These misaligned primers can be extended by PolIV. Exhibits no 3'-5' exonuclease (proofreading) activity. May be involved in translesional synthesis, in conjunction with the beta clamp from PolIII. The chain is DNA polymerase IV from Yersinia pestis bv. Antiqua (strain Antiqua).